Reading from the N-terminus, the 196-residue chain is MISAKLVKELRDRTGAGMMECKKALEEANGDIEKAIEVLRKRGIAKAAKKASRETGEGIIASYVHFNKKIGVLVELNCETDFVARTEEFQELGNKIAMHVAAMSPRWVKREDVPQEVIEKEKEIYREQLKDSGKPEHVIEKIIEGKLNKFFEENCLYEQKFAFDEEKMVEDMIKEAIAKIGENIKVSRFVKFTVGE.

The involved in Mg(2+) ion dislocation from EF-Tu stretch occupies residues 80–83 (TDFV).

The protein belongs to the EF-Ts family.

Its subcellular location is the cytoplasm. In terms of biological role, associates with the EF-Tu.GDP complex and induces the exchange of GDP to GTP. It remains bound to the aminoacyl-tRNA.EF-Tu.GTP complex up to the GTP hydrolysis stage on the ribosome. The sequence is that of Elongation factor Ts from Thermosipho melanesiensis (strain DSM 12029 / CIP 104789 / BI429).